Reading from the N-terminus, the 719-residue chain is Leucine-rich repeat and fibronectin type-III domain-containing protein 5 (719 aa).

The first 17 residues, 1–17, serve as a signal peptide directing secretion; that stretch reads MEKILFYLFLIGIAVKA. Residues 18–51 form the LRRNT domain; that stretch reads QICPKRCVCQILSPNLATLCAKKGLLFVPPNIDR. The Extracellular segment spans residues 18–529; sequence QICPKRCVCQ…MQSQFLGGTM (512 aa). 7 LRR repeats span residues 52–73, 76–97, 100–121, 124–145, 148–169, 172–193, and 196–217; these read RTVELRLADNFVTNIKRKDFAN, SLVDLTLSRNTISFITPHAFAD, NLRALHLNSNRLTKITNDMFSG, NLHHLILNNNQLTLISSTAFDD, ALEELDLSYNNLETIPWDAVEK, SLHTLSLDHNMIDNIPKGTFSH, and KMTRLDVTSNKLQKLPPDPLFQ. N-linked (GlcNAc...) asparagine glycosylation is present at asparagine 73. The LRRCT domain occupies 240 to 286; the sequence is NPLHCNCELLWLRRLSREDDLETCASPPLLTGRYFWSIPEEEFLCEP. In terms of domain architecture, Ig-like spans 287 to 373; it reads PLITRHTHEM…GEATQIVDLH (87 aa). Residues cysteine 308 and cysteine 357 are joined by a disulfide bond. 5 N-linked (GlcNAc...) asparagine glycosylation sites follow: asparagine 330, asparagine 339, asparagine 382, asparagine 406, and asparagine 452. The interval 385–414 is disordered; it reads NHIHEPDPGSSDISTSTKSGSNTSSSNGDT. Residues 393 to 414 are compositionally biased toward low complexity; that stretch reads GSSDISTSTKSGSNTSSSNGDT. One can recognise a Fibronectin type-III domain in the interval 414 to 503; sequence TKLSQDKIVV…ITSLTATRVV (90 aa). Residues 530–550 traverse the membrane as a helical segment; the sequence is IIIIGGIIVASVLVFIIILMI. At 551–719 the chain is on the cytoplasmic side; that stretch reads RYKVCNNNGQ…VQETQRLELI (169 aa). The segment covering 615–627 has biased composition (low complexity); it reads ETCSSQDSSTTTS. A disordered region spans residues 615–694; the sequence is ETCSSQDSST…SVTEGPTSKR (80 aa). Polar residues-rich tracts occupy residues 628 to 641 and 649 to 677; these read ALPPSWTSSTSVSQ and TKPSTEPQNEAVTNVESQNTNRNNSTALQ.

The protein belongs to the LRFN family. Can form heteromeric complexes with LRFN1, LRFN2, LRFN3 and LFRN4. Able to form homomeric complexes across cell junctions, between adjacent cells. Does not interact with DLG1, DLG2, DLG3 and DLG4.

The protein resides in the membrane. Its function is as follows. Cell adhesion molecule that mediates homophilic cell-cell adhesion in a Ca(2+)-independent manner. Promotes neurite outgrowth in hippocampal neurons. The sequence is that of Leucine-rich repeat and fibronectin type-III domain-containing protein 5 (LRFN5) from Homo sapiens (Human).